The primary structure comprises 191 residues: uncharacterized protein (191 aa).

The first 22 residues, 1–22, serve as a signal peptide directing secretion; the sequence is MKSLRLMLCAMPLMLTGCSTMS.

This is an uncharacterized protein from Escherichia coli (strain K12).